A 147-amino-acid chain; its full sequence is Peptide methionine sulfoxide reductase MsrB (147 aa).

The region spanning 25-147 (DEYWREHLTE…NSVSLIFNKK (123 aa)) is the MsrB domain. Zn(2+)-binding residues include Cys64, Cys67, Cys113, and Cys116. Cys136 acts as the Nucleophile in catalysis.

This sequence belongs to the MsrB Met sulfoxide reductase family. Zn(2+) is required as a cofactor.

The catalysed reaction is L-methionyl-[protein] + [thioredoxin]-disulfide + H2O = L-methionyl-(R)-S-oxide-[protein] + [thioredoxin]-dithiol. The protein is Peptide methionine sulfoxide reductase MsrB of Vibrio cholerae serotype O1 (strain ATCC 39541 / Classical Ogawa 395 / O395).